Reading from the N-terminus, the 109-residue chain is Mitochondrial pyruvate carrier 2 (109 aa).

3 helical membrane passes run 19–35 (IHFWAPTFKWGISIANI), 51–67 (IAVTCTGMIWCRCSTII), and 74–90 (LFSVNVAMAATGIYQLT).

The protein belongs to the mitochondrial pyruvate carrier (MPC) (TC 2.A.105) family.

Its subcellular location is the mitochondrion inner membrane. In terms of biological role, mediates the uptake of pyruvate into mitochondria. This chain is Mitochondrial pyruvate carrier 2, found in Arabidopsis thaliana (Mouse-ear cress).